A 314-amino-acid polypeptide reads, in one-letter code: Oxidoreductase poxI (314 aa).

This sequence belongs to the NmrA-type oxidoreductase family. Isoflavone reductase subfamily.

Its pathway is secondary metabolite biosynthesis. Functionally, oxidoreductase; part of the gene cluster that mediates the biosynthesis of oxaleimides, cytotoxic compounds containing an unusual disubstituted succinimide moiety. The first step of the pathway is provided by the HR-PKS poxF that serves in a new mode of collaborative biosynthesis with the PKS-NRPS poxE, by providing the olefin containing amino acid substrate via the synthesis of an ACP-bound dec-4-enoate. The cytochrome P450 monooxygenase poxM-catalyzed oxidation at the alpha-position creates the enzyme-bound 2-hydroxydec-4-enoyl-ACP thioester, which may be prone to spontaneous hydrolysis to yield 2-hydroxydec-4-enoic acid due to increased electrophilicity of the carbonyl. 2-hydroxydec-4-enoic acid can then be further oxidized by poxM to yield the alpha-ketoacid 2-oxodec-4-enoicacid, which is reductively aminated by the aminotransferase poxL to yield (S,E)-2-aminodec-4-enoic acid. The Hybrid PKS-NRPS synthetase poxE then performs condensation between the octaketide product of its PKS modules and the amino group of (S,E)-2-aminodec-4-enoic acid which is activated and incorporated by the adenylation domain. The resulting aminoacyl product can be cyclized by the Diels-Alderase PoxQ and reductively released by the reductive (R) domain of poxE to yield an aldehyde intermediate. The released aldehyde is then substrate for a Knoevenagel condensation by the hydrolyase poxO followed by an oxidation at the 5-position of the pyrrolidone ring. The presence of the olefin from the amino acid building block allows for migration of the substituted allyl group to occur. This allylic transposition reaction takes place in a conjugate addition, semipinacol-like fashion to yield a succinimide intermediate. Iterative two-electron oxidations of the C7 methyl of the succinimide intermediate to the carboxylic acid can be catalyzed by one of two remaining cytochrome P450 monooxygenasess poxC or poxD to yield oxaleimide A. Subsequent oxidation yields the maleimide scaffold oxaleimide I. Both oxaleimide A and oxaleimide I can undergo oxidative modifications in the decalin ring to yield the series of products oxaleimides B to H. The polypeptide is Oxidoreductase poxI (Penicillium oxalicum (strain 114-2 / CGMCC 5302) (Penicillium decumbens)).